Consider the following 343-residue polypeptide: MPEDELEDLPGVGPATSDKLVDAGFESYQAIAVASPAEMSNTADVGESTASDIINAARDAADVGGFETGAAVLQRREEIGKLSWKIPEVDELLGGGIETQSITEVYGEFGAGKSQVTHQMAVNVQLPPEHGGLGGAAIFVDSEDTFRPERIDDMLRGLDDEIITDLLERREIEGTPGDDETMKALLDSFLDHIHVAKAFNSNHQILLAEKAKELARDNQDSGFPVRLLCVDSLTAHFRAEYVGRGSLAERQQKLNKHLHDLMRIGDLYNTAVLVTNQVASNPDSYFGDPTQPIGGNILGHTSTFRMYLRKSKNDKRIVRLVDAPNLADGEAVMRVKDAGLKPE.

107-114 contacts ATP; sequence GEFGAGKS.

The protein belongs to the eukaryotic RecA-like protein family.

Functionally, involved in DNA repair and in homologous recombination. Binds and assemble on single-stranded DNA to form a nucleoprotein filament. Hydrolyzes ATP in a ssDNA-dependent manner and promotes DNA strand exchange between homologous DNA molecules. This Haloquadratum walsbyi (strain DSM 16790 / HBSQ001) protein is DNA repair and recombination protein RadA.